The chain runs to 673 residues: Polyadenylate-binding protein, cytoplasmic and nuclear (673 aa).

The disordered stretch occupies residues 1 to 39 (MSAETATSPAPAAETPVAPAPATQTTPAEGAPTPAAAAP). RRM domains follow at residues 46-124 (ASLY…WSQR), 134-211 (GNIF…HHVG), 227-304 (TNVY…RAQT), and 330-407 (VNLY…LAQR). The tract at residues 300-322 (GRAQTKSEREAELKKSHEEKRLE) is disordered. Residues 304-322 (TKSEREAELKKSHEEKRLE) show a composition bias toward basic and acidic residues. Disordered regions lie at residues 509–572 (APGY…AGRL) and 644–673 (WGKD…EKKE). The 78-residue stretch at 569 to 646 (AGRLDAQSLA…ALRVLAEWGK (78 aa)) folds into the PABC domain.

Belongs to the polyadenylate-binding protein type-1 family.

The protein localises to the cytoplasm. The protein resides in the nucleus. In terms of biological role, binds the poly(A) tail of mRNA. Appears to be an important mediator of the multiple roles of the poly(A) tail in mRNA biogenesis, stability and translation. In the nucleus, involved in both mRNA cleavage and polyadenylation. Is also required for efficient mRNA export to the cytoplasm. Acts in concert with a poly(A)-specific nuclease (PAN) to affect poly(A) tail shortening, which may occur concomitantly with either nucleocytoplasmic mRNA transport or translational initiation. In the cytoplasm, stimulates translation initiation and regulates mRNA decay through translation termination-coupled poly(A) shortening, probably mediated by PAN. The polypeptide is Polyadenylate-binding protein, cytoplasmic and nuclear (PAB1) (Cryptococcus neoformans var. neoformans serotype D (strain B-3501A) (Filobasidiella neoformans)).